The following is a 147-amino-acid chain: Small ribosomal subunit protein uS12 (147 aa).

This sequence belongs to the universal ribosomal protein uS12 family. Part of the 30S ribosomal subunit.

In terms of biological role, with S4 and S5 plays an important role in translational accuracy. Located at the interface of the 30S and 50S subunits. The sequence is that of Small ribosomal subunit protein uS12 from Saccharolobus solfataricus (strain ATCC 35092 / DSM 1617 / JCM 11322 / P2) (Sulfolobus solfataricus).